The chain runs to 540 residues: Glucose-6-phosphate isomerase (540 aa).

The active-site Proton donor is the Glu-350. Active-site residues include His-381 and Lys-503.

This sequence belongs to the GPI family.

It localises to the cytoplasm. The enzyme catalyses alpha-D-glucose 6-phosphate = beta-D-fructose 6-phosphate. The protein operates within carbohydrate biosynthesis; gluconeogenesis. Its pathway is carbohydrate degradation; glycolysis; D-glyceraldehyde 3-phosphate and glycerone phosphate from D-glucose: step 2/4. Its function is as follows. Catalyzes the reversible isomerization of glucose-6-phosphate to fructose-6-phosphate. In Burkholderia pseudomallei (strain 1106a), this protein is Glucose-6-phosphate isomerase.